The chain runs to 1070 residues: MSQESNGGPAAGGGAAAAPPPPPQYIITTPSEVDPDEVRSMADLELGSPEKQVQVQSQKFSSTSSTTKVATHSFSMSSSAGTTGQQSKQDSAQQIQQLQQLQQLQQLQQQQQQQQSQRIISSSTRSQSLQSSTIVGEATTITSGAAQILSASAAASLAQQLKAQSSTSIITSSEQRTSTSTSSSSSTRYIASGSSNLAGGNSNSASSASSKTRFQSFLQQPEGAHGFLTAHQKHVRQFVRSTSAHSEAAAGVAGARAEKCIRSASTQIDDASVAGVVESAGNLTDSSATGGSMQLSMSKLGLQQSSSILISKSAETIEMKSSSAGMRTQLTLSGGFLAPPGNRKITILSPIHAPPGLHDMLKRAQGRSPLSPRISFPGSDSDLFGFDVENGQGARSPLEGGSPSAGLVLQNLPQRRESFLYRSDSDFEMSPKSMSRNSSIASERFKEQEASILVDRSHGEDLIVTPFAQILASLRSVRNNLLSLTNVPASNKSRRPNQSSSASRSGNPPGAPLSQGEEAYTRLATDTIEELDWCLDQLETIQTHRSVSDMASLKFKRMLNKELSHFSESSRSGNQISEYICSTFLDKQQEFDLPSLRVEDNPELVAANAAAGQQSAGQYARSRSPRGPPMSQISGVKRPLSHTNSFTGERLPTFGVETPRENELGTLLGELDTWGIQIFSIGEFSVNRPLTCVAYTIFQSRELLTSLMIPPKTFLNFMSTLEDHYVKDNPFHNSLHAADVTQSTNVLLNTPALEGVFTPLEVGGALFAACIHDVDHPGLTNQFLVNSSSELALMYNDESVLENHHLAVAFKLLQNQGCDIFCNMQKKQRQTLRKMVIDIVLSTDMSKHMSLLADLKTMVETKKVAGSGVLLLDNYTDRIQVLENLVHCADLSNPTKPLPLYKRWVALLMEEFFLQGDKERESGMDISPMCDRHNATIEKSQVGFIDYIVHPLWETWADLVHPDAQDILDTLEENRDYYQSMIPPSPPPSGVDENPQEDRIRFQVTLEESDQENLAELEEGDESGGESTTTGTTGTTAASALSGAGGGGGGGGGMAPRTGGCQNQPQHGGM.

Disordered regions lie at residues 1–91 (MSQE…KQDS), 166–215 (STSI…TRFQ), 487–516 (VPAS…LSQG), and 615–653 (SAGQ…RLPT). The segment covering 51–69 (KQVQVQSQKFSSTSSTTKV) has biased composition (low complexity). The segment covering 70 to 84 (ATHSFSMSSSAGTTG) has biased composition (polar residues). Residues 166–210 (STSIITSSEQRTSTSTSSSSSTRYIASGSSNLAGGNSNSASSASS) are compositionally biased toward low complexity. Polar residues predominate over residues 488–506 (PASNKSRRPNQSSSASRSG). The PDEase domain occupies 656 to 985 (VETPRENELG…DYYQSMIPPS (330 aa)). The Proton donor role is filled by His-732. 732 to 736 (HNSLH) serves as a coordination point for 3',5'-cyclic AMP. The a divalent metal cation site is built by His-736, His-772, Asp-773, and Asp-890. Residues Asp-773, Asp-890, and Gln-941 each coordinate 3',5'-cyclic AMP. Acidic residues predominate over residues 1007-1024 (EESDQENLAELEEGDESG). A disordered region spans residues 1007–1070 (EESDQENLAE…CQNQPQHGGM (64 aa)). Positions 1025-1042 (GESTTTGTTGTTAASALS) are enriched in low complexity. Positions 1043–1054 (GAGGGGGGGGGM) are enriched in gly residues. A compositionally biased stretch (polar residues) spans 1060–1070 (GCQNQPQHGGM).

Belongs to the cyclic nucleotide phosphodiesterase family. PDE4 subfamily. As to quaternary structure, monomer. A divalent metal cation serves as cofactor.

The enzyme catalyses 3',5'-cyclic AMP + H2O = AMP + H(+). It functions in the pathway purine metabolism; 3',5'-cyclic AMP degradation; AMP from 3',5'-cyclic AMP: step 1/1. In terms of biological role, hydrolyzes the second messenger cAMP, which is a key regulator of many important physiological processes. Vital for female fertility. Required for learning/memory. This is 3',5'-cyclic-AMP phosphodiesterase (dnc) from Drosophila melanogaster (Fruit fly).